Consider the following 122-residue polypeptide: MLAVRAWGRTYNTLVQRKLNAACPTGALPAVTLRPLHCSLVARSPEQSLKDSKTFDPTLLQFLVCPLSRKSLRYEESTNELINDELGIAYPIVDGIPNMIPQDARMIHKDRKPESPDTEQTT.

Residues 1–40 (MLAVRAWGRTYNTLVQRKLNAACPTGALPAVTLRPLHCSL) constitute a mitochondrion transit peptide. One can recognise a TRM112 domain in the interval 56-102 (DPTLLQFLVCPLSRKSLRYEESTNELINDELGIAYPIVDGIPNMIPQ).

It belongs to the PREY family.

It localises to the mitochondrion. In terms of biological role, in mitochondria, S-adenosylmethionine-dependent methyltransferase chaperone that supports both coenzyme Q biosynthesis and NADH:ubiquinone oxidoreductase complex (complex I, MT-ND1) assembly. The chain is Protein preY, mitochondrial (pyurf) from Xenopus tropicalis (Western clawed frog).